The primary structure comprises 176 residues: Peptide methionine sulfoxide reductase MsrA (176 aa).

The active site involves cysteine 10.

It belongs to the MsrA Met sulfoxide reductase family.

The enzyme catalyses L-methionyl-[protein] + [thioredoxin]-disulfide + H2O = L-methionyl-(S)-S-oxide-[protein] + [thioredoxin]-dithiol. It catalyses the reaction [thioredoxin]-disulfide + L-methionine + H2O = L-methionine (S)-S-oxide + [thioredoxin]-dithiol. In terms of biological role, has an important function as a repair enzyme for proteins that have been inactivated by oxidation. Catalyzes the reversible oxidation-reduction of methionine sulfoxide in proteins to methionine. The protein is Peptide methionine sulfoxide reductase MsrA of Chromobacterium violaceum (strain ATCC 12472 / DSM 30191 / JCM 1249 / CCUG 213 / NBRC 12614 / NCIMB 9131 / NCTC 9757 / MK).